A 336-amino-acid polypeptide reads, in one-letter code: Protein-lysine N-methyltransferase EFM3 (336 aa).

Residues Trp-147, 173-175 (GTG), Asp-196, Leu-232, and Ala-251 contribute to the S-adenosyl-L-methionine site.

Belongs to the class I-like SAM-binding methyltransferase superfamily. EEF2KMT family.

Its subcellular location is the cytoplasm. S-adenosyl-L-methionine-dependent protein-lysine N-methyltransferase that methylates elongation factor 2. The polypeptide is Protein-lysine N-methyltransferase EFM3 (Chaetomium thermophilum (strain DSM 1495 / CBS 144.50 / IMI 039719) (Thermochaetoides thermophila)).